The sequence spans 122 residues: Biogenesis of lysosome-related organelles complex 1 subunit CNL1 (122 aa).

Positions 1–10 (MQDNSSHSRE) are enriched in basic and acidic residues. The interval 1-21 (MQDNSSHSRESASAGDDPLGI) is disordered. Positions 63–95 (ENTIDKNIAKFKELLEKCDTLENHYEMLNQLAI) form a coiled coil.

It belongs to the BLOC1S4 family. Component of the biogenesis of lysosome-related organelles complex-1 (BLOC-1) composed of at least BLI1, BLS1, CNL1, KXD1, SNN1 and VAB2.

The protein resides in the cytoplasm. Component of the biogenesis of lysosome-related organelles complex-1 (BLOC-1), a complex that is involved in endosomal cargo sorting. In Saccharomyces cerevisiae (strain ATCC 204508 / S288c) (Baker's yeast), this protein is Biogenesis of lysosome-related organelles complex 1 subunit CNL1 (CNL1).